The chain runs to 435 residues: MGNLKIYPGKLSGEVKIPPSKSMAHRAVICAALGDGVSKVTNIDYSDDIIATIEAMSSLGAKITKKEDYLEVYGINSPENIKANSVKEQRTIDCNESGSTLRFLVPIAALFDGVNRFVGRGNLGKRPLDTYYKIFDEQGIKYSYKDGILDLKTEGKLKAGEFKMEGNISSQFITGLLFTLPLLDGDSKIVITTEMESKGYIDLTLRAIKDFGVEIINNNYEEFIIKGNQIYKSIDYRVEGDYSQAAFFFCADALSSNIVLNDLKLDSLQGDKEVIDILQRMGLKLNNKDNGLIGSASLGLKSTIIDGSQCPDIIPVVSLVAALSEGTTEIINAGRLRIKECDRLAAVTSELNKLGAKIIEKEEGLIIEGVKELKGNVEVWSHKDHRIAMTMAIASTMCKERIILKDYECVSKSYPQFWDDFKNLGGVFDEWNVGE.

Positions 21, 22, and 26 each coordinate 3-phosphoshikimate. Lys-21 contributes to the phosphoenolpyruvate binding site. Residues Gly-98 and Arg-126 each contribute to the phosphoenolpyruvate site. Residues Ser-169, Ser-170, Gln-171, Ser-197, Asp-312, and Lys-339 each coordinate 3-phosphoshikimate. Gln-171 contacts phosphoenolpyruvate. Asp-312 (proton acceptor) is an active-site residue. Phosphoenolpyruvate contacts are provided by Arg-343, Arg-386, and Lys-412.

This sequence belongs to the EPSP synthase family. In terms of assembly, monomer.

Its subcellular location is the cytoplasm. The enzyme catalyses 3-phosphoshikimate + phosphoenolpyruvate = 5-O-(1-carboxyvinyl)-3-phosphoshikimate + phosphate. It participates in metabolic intermediate biosynthesis; chorismate biosynthesis; chorismate from D-erythrose 4-phosphate and phosphoenolpyruvate: step 6/7. Catalyzes the transfer of the enolpyruvyl moiety of phosphoenolpyruvate (PEP) to the 5-hydroxyl of shikimate-3-phosphate (S3P) to produce enolpyruvyl shikimate-3-phosphate and inorganic phosphate. The sequence is that of 3-phosphoshikimate 1-carboxyvinyltransferase from Clostridium beijerinckii (strain ATCC 51743 / NCIMB 8052) (Clostridium acetobutylicum).